The primary structure comprises 94 residues: Neurotoxin 213 (94 aa).

Positions 1–22 (MLKFILTCTSVILFTAVEDSSC) are cleaved as a signal peptide. One can recognise an LCN-type CS-alpha/beta domain in the interval 24-88 (KGGNYPISVY…YWDYHRNNCK (65 aa)). Disulfide bonds link Cys39/Cys62, Cys48/Cys67, and Cys52/Cys69.

The protein belongs to the long (3 C-C) scorpion toxin superfamily. As to expression, expressed by the venom gland.

It localises to the secreted. The sequence is that of Neurotoxin 213 from Lychas mucronatus (Chinese swimming scorpion).